Here is a 348-residue protein sequence, read N- to C-terminus: Phosphoribosylformylglycinamidine cyclo-ligase (348 aa).

This sequence belongs to the AIR synthase family.

The protein localises to the cytoplasm. It carries out the reaction 2-formamido-N(1)-(5-O-phospho-beta-D-ribosyl)acetamidine + ATP = 5-amino-1-(5-phospho-beta-D-ribosyl)imidazole + ADP + phosphate + H(+). It participates in purine metabolism; IMP biosynthesis via de novo pathway; 5-amino-1-(5-phospho-D-ribosyl)imidazole from N(2)-formyl-N(1)-(5-phospho-D-ribosyl)glycinamide: step 2/2. This Cereibacter sphaeroides (strain ATCC 17029 / ATH 2.4.9) (Rhodobacter sphaeroides) protein is Phosphoribosylformylglycinamidine cyclo-ligase.